The primary structure comprises 65 residues: MNIIEKNNIDKNHLKKNLLDLLKEQFNIRLQLSSGKLKKTHLVKKNKKDIARIKTVLNKRINHTL.

Belongs to the universal ribosomal protein uL29 family.

This is Large ribosomal subunit protein uL29 from Buchnera aphidicola subsp. Cinara cedri (strain Cc).